The chain runs to 350 residues: Pro-cathepsin H (350 aa).

A signal peptide spans 1–19; it reads MAQWTLLIVFFCVATAAAG. The propeptide at 20–113 is activation peptide; the sequence is LSFHDSNPIR…WEEFRSHRLG (94 aa). N117 carries an N-linked (GlcNAc...) asparagine glycan. The propeptide at 122-132 is removed in mature form; that stretch reads LKGNHRITDVV. 2 disulfide bridges follow: C154/C197 and C188/C230. C157 is an active-site residue. N177 carries N-linked (GlcNAc...) asparagine glycosylation. N246 carries N-linked (GlcNAc...) asparagine glycosylation. Cysteines 288 and 338 form a disulfide. Catalysis depends on residues H297 and N317.

The protein belongs to the peptidase C1 family. In terms of assembly, interacts with KPI104 and KPI106. Composed of a mini chain and a large chain. The large chain may be split into heavy and light chain. All chains are held together by disulfide bonds.

It localises to the vacuole. The protein localises to the lysosome. The catalysed reaction is Hydrolysis of proteins, acting as an aminopeptidase (notably, cleaving Arg-|-Xaa bonds) as well as an endopeptidase.. May play a role in proteolysis leading to mobilization of nitrogen during senescence and starvation. In Medicago truncatula (Barrel medic), this protein is Pro-cathepsin H.